The sequence spans 317 residues: Porphobilinogen deaminase (317 aa).

Residue C245 is modified to S-(dipyrrolylmethanemethyl)cysteine.

Belongs to the HMBS family. Monomer. It depends on dipyrromethane as a cofactor.

The enzyme catalyses 4 porphobilinogen + H2O = hydroxymethylbilane + 4 NH4(+). It functions in the pathway porphyrin-containing compound metabolism; protoporphyrin-IX biosynthesis; coproporphyrinogen-III from 5-aminolevulinate: step 2/4. Its pathway is porphyrin-containing compound metabolism; chlorophyll biosynthesis. Functionally, tetrapolymerization of the monopyrrole PBG into the hydroxymethylbilane pre-uroporphyrinogen in several discrete steps. This chain is Porphobilinogen deaminase, found in Prochlorococcus marinus (strain MIT 9303).